The following is a 47-amino-acid chain: Bifunctional chitinase/lysozyme (47 aa).

Residues 1 to 47 form the GH18 domain; it reads GGIAIYWGQNGNEGTLTQTCNTGKYSYVNIAFLNKFGNGQTPEINLA.

The protein belongs to the glycosyl hydrolase 18 family. Chitinase class II subfamily.

The protein resides in the secreted. The protein localises to the extracellular space. The enzyme catalyses Random endo-hydrolysis of N-acetyl-beta-D-glucosaminide (1-&gt;4)-beta-linkages in chitin and chitodextrins.. The catalysed reaction is Hydrolysis of (1-&gt;4)-beta-linkages between N-acetylmuramic acid and N-acetyl-D-glucosamine residues in a peptidoglycan and between N-acetyl-D-glucosamine residues in chitodextrins.. In terms of biological role, bifunctional enzyme with lysozyme/chitinase activity. The protein is Bifunctional chitinase/lysozyme of Parthenocissus quinquefolia (Virginia creeper).